Consider the following 115-residue polypeptide: Large ribosomal subunit protein bL20 (115 aa).

It belongs to the bacterial ribosomal protein bL20 family.

Its function is as follows. Binds directly to 23S ribosomal RNA and is necessary for the in vitro assembly process of the 50S ribosomal subunit. It is not involved in the protein synthesizing functions of that subunit. This Borrelia garinii subsp. bavariensis (strain ATCC BAA-2496 / DSM 23469 / PBi) (Borreliella bavariensis) protein is Large ribosomal subunit protein bL20.